Reading from the N-terminus, the 315-residue chain is L-lactate dehydrogenase (315 aa).

Residues Val-17, Asp-38, Lys-43, Tyr-69, and Gly-83–Ala-84 contribute to the NAD(+) site. Substrate contacts are provided by Gln-86 and Arg-92. Residues Ser-105, Ala-122–Asn-124, and Ser-147 each bind NAD(+). Asn-124–Asp-127 contributes to the substrate binding site. Asp-152–Arg-155 serves as a coordination point for substrate. Residues Arg-157 and His-172 each contribute to the beta-D-fructose 1,6-bisphosphate site. His-179 acts as the Proton acceptor in catalysis. Tyr-223 carries the post-translational modification Phosphotyrosine. Substrate is bound at residue Thr-232.

The protein belongs to the LDH/MDH superfamily. LDH family. Homotetramer.

Its subcellular location is the cytoplasm. The catalysed reaction is (S)-lactate + NAD(+) = pyruvate + NADH + H(+). It participates in fermentation; pyruvate fermentation to lactate; (S)-lactate from pyruvate: step 1/1. Its activity is regulated as follows. Allosterically activated by fructose 1,6-bisphosphate (FBP). Catalyzes the conversion of lactate to pyruvate. This chain is L-lactate dehydrogenase, found in Macrococcus caseolyticus (strain JCSC5402) (Macrococcoides caseolyticum).